The following is a 793-amino-acid chain: ClpA homolog protein (793 aa).

The segment at 1-24 (MRPRSNAGSSPPDPEEQEHAQVPS) is disordered. Positions 22-168 (VPSFSSTLEQ…NFIAHGVAKD (147 aa)) constitute a Clp R domain. Repeat regions lie at residues 25-88 (FSST…IDDD) and 103-168 (PTAA…VAKD). Residues 169-194 (PSYGESRPVQGADEPQETPKAEAGEA) form a disordered region. The segment covering 185–194 (ETPKAEAGEA) has biased composition (basic and acidic residues). The segment at 199–447 (LSKYCVDLNI…AQHLVSDSKR (249 aa)) is i. Residues 244–251 (GDPGVGKT) and 525–532 (GPTGVGKT) contribute to the ATP site. Positions 451–639 (LGTKEIEAVV…ILIMTSNVGA (189 aa)) are II.

Belongs to the ClpA/ClpB family.

The chain is ClpA homolog protein from Fuscovulum blasticum (Rhodobacter blasticus).